We begin with the raw amino-acid sequence, 556 residues long: Urocanate hydratase (556 aa).

NAD(+) contacts are provided by residues 52-53, Q130, 176-178, E196, R201, 242-243, 263-267, 273-274, and Y322; these read GG, GMG, NA, QTSAH, and YL. C410 is a catalytic residue. G492 provides a ligand contact to NAD(+).

Belongs to the urocanase family. It depends on NAD(+) as a cofactor.

It is found in the cytoplasm. It carries out the reaction 4-imidazolone-5-propanoate = trans-urocanate + H2O. The protein operates within amino-acid degradation; L-histidine degradation into L-glutamate; N-formimidoyl-L-glutamate from L-histidine: step 2/3. Functionally, catalyzes the conversion of urocanate to 4-imidazolone-5-propionate. In Shewanella woodyi (strain ATCC 51908 / MS32), this protein is Urocanate hydratase.